A 412-amino-acid polypeptide reads, in one-letter code: Lipoyl synthase, mitochondrial (412 aa).

Residues Cys-127, Cys-132, Cys-138, Cys-159, Cys-163, Cys-166, and Ser-375 each coordinate [4Fe-4S] cluster. Residues Ser-142–Leu-364 enclose the Radical SAM core domain.

This sequence belongs to the radical SAM superfamily. Lipoyl synthase family. Requires [4Fe-4S] cluster as cofactor.

It is found in the mitochondrion. The catalysed reaction is [[Fe-S] cluster scaffold protein carrying a second [4Fe-4S](2+) cluster] + N(6)-octanoyl-L-lysyl-[protein] + 2 oxidized [2Fe-2S]-[ferredoxin] + 2 S-adenosyl-L-methionine + 4 H(+) = [[Fe-S] cluster scaffold protein] + N(6)-[(R)-dihydrolipoyl]-L-lysyl-[protein] + 4 Fe(3+) + 2 hydrogen sulfide + 2 5'-deoxyadenosine + 2 L-methionine + 2 reduced [2Fe-2S]-[ferredoxin]. Its pathway is protein modification; protein lipoylation via endogenous pathway; protein N(6)-(lipoyl)lysine from octanoyl-[acyl-carrier-protein]: step 2/2. Its function is as follows. Catalyzes the radical-mediated insertion of two sulfur atoms into the C-6 and C-8 positions of the octanoyl moiety bound to the lipoyl domains of lipoate-dependent enzymes, thereby converting the octanoylated domains into lipoylated derivatives. The chain is Lipoyl synthase, mitochondrial from Leishmania infantum.